The chain runs to 146 residues: Putative pre-16S rRNA nuclease (146 aa).

This sequence belongs to the YqgF nuclease family.

The protein localises to the cytoplasm. In terms of biological role, could be a nuclease involved in processing of the 5'-end of pre-16S rRNA. The sequence is that of Putative pre-16S rRNA nuclease from Burkholderia pseudomallei (strain 668).